The primary structure comprises 304 residues: Protoheme IX farnesyltransferase 1 (304 aa).

Transmembrane regions (helical) follow at residues 24–44 (VVVLMLITSLIGMLLATKAPL), 47–67 (FVPWQVLIFGNLGIGLCAGAA), 99–119 (MALGFALLLALAGMAVLLAFT), 122–142 (LTAWLTLASLLGYAALYTGFL), 150–170 (IVIGGLAGAAPPLLGWVAITG), 176–196 (PLLLVLIIFAWTPPHFWALCI), 228–248 (LVLFAVSLMPFVIHMSGLVYL), and 280–300 (YSIVYLFLLFMALLVDHYLPL).

This sequence belongs to the UbiA prenyltransferase family. Protoheme IX farnesyltransferase subfamily.

Its subcellular location is the cell inner membrane. It catalyses the reaction heme b + (2E,6E)-farnesyl diphosphate + H2O = Fe(II)-heme o + diphosphate. Its pathway is porphyrin-containing compound metabolism; heme O biosynthesis; heme O from protoheme: step 1/1. Functionally, converts heme B (protoheme IX) to heme O by substitution of the vinyl group on carbon 2 of heme B porphyrin ring with a hydroxyethyl farnesyl side group. This is Protoheme IX farnesyltransferase 1 from Pseudomonas aeruginosa (strain UCBPP-PA14).